Reading from the N-terminus, the 156-residue chain is 6,7-dimethyl-8-ribityllumazine synthase (156 aa).

Residues Phe-23, 57–59 (AFE), and 81–83 (AII) contribute to the 5-amino-6-(D-ribitylamino)uracil site. 86-87 (ST) contributes to the (2S)-2-hydroxy-3-oxobutyl phosphate binding site. The active-site Proton donor is the His-89. 5-amino-6-(D-ribitylamino)uracil is bound at residue Phe-114. Arg-128 is a (2S)-2-hydroxy-3-oxobutyl phosphate binding site.

It belongs to the DMRL synthase family.

The catalysed reaction is (2S)-2-hydroxy-3-oxobutyl phosphate + 5-amino-6-(D-ribitylamino)uracil = 6,7-dimethyl-8-(1-D-ribityl)lumazine + phosphate + 2 H2O + H(+). It functions in the pathway cofactor biosynthesis; riboflavin biosynthesis; riboflavin from 2-hydroxy-3-oxobutyl phosphate and 5-amino-6-(D-ribitylamino)uracil: step 1/2. Functionally, catalyzes the formation of 6,7-dimethyl-8-ribityllumazine by condensation of 5-amino-6-(D-ribitylamino)uracil with 3,4-dihydroxy-2-butanone 4-phosphate. This is the penultimate step in the biosynthesis of riboflavin. The polypeptide is 6,7-dimethyl-8-ribityllumazine synthase (Wolinella succinogenes (strain ATCC 29543 / DSM 1740 / CCUG 13145 / JCM 31913 / LMG 7466 / NCTC 11488 / FDC 602W) (Vibrio succinogenes)).